A 194-amino-acid chain; its full sequence is Leucyl/phenylalanyl-tRNA--protein transferase (194 aa).

The protein belongs to the L/F-transferase family.

It localises to the cytoplasm. The enzyme catalyses N-terminal L-lysyl-[protein] + L-leucyl-tRNA(Leu) = N-terminal L-leucyl-L-lysyl-[protein] + tRNA(Leu) + H(+). The catalysed reaction is N-terminal L-arginyl-[protein] + L-leucyl-tRNA(Leu) = N-terminal L-leucyl-L-arginyl-[protein] + tRNA(Leu) + H(+). It carries out the reaction L-phenylalanyl-tRNA(Phe) + an N-terminal L-alpha-aminoacyl-[protein] = an N-terminal L-phenylalanyl-L-alpha-aminoacyl-[protein] + tRNA(Phe). Functionally, functions in the N-end rule pathway of protein degradation where it conjugates Leu, Phe and, less efficiently, Met from aminoacyl-tRNAs to the N-termini of proteins containing an N-terminal arginine or lysine. This chain is Leucyl/phenylalanyl-tRNA--protein transferase, found in Chlorobium limicola (strain DSM 245 / NBRC 103803 / 6330).